A 233-amino-acid polypeptide reads, in one-letter code: Membrane glycoprotein UL9 (233 aa).

The N-terminal stretch at methionine 1–serine 20 is a signal peptide. 5 N-linked (GlcNAc...) asparagine; by host glycosylation sites follow: asparagine 40, asparagine 94, asparagine 101, asparagine 131, and asparagine 169. The helical transmembrane segment at methionine 194–proline 214 threads the bilayer.

The protein belongs to the HHV-5 UL9 family.

The protein resides in the host membrane. The chain is Membrane glycoprotein UL9 (UL9) from Homo sapiens (Human).